We begin with the raw amino-acid sequence, 83 residues long: RNA-binding protein Hfq (83 aa).

In terms of domain architecture, Sm spans 10 to 70 (DAFLNQVRKE…ISTVSPLKPV (61 aa)).

This sequence belongs to the Hfq family. In terms of assembly, homohexamer.

RNA chaperone that binds small regulatory RNA (sRNAs) and mRNAs to facilitate mRNA translational regulation in response to envelope stress, environmental stress and changes in metabolite concentrations. Also binds with high specificity to tRNAs. The sequence is that of RNA-binding protein Hfq from Pelotomaculum thermopropionicum (strain DSM 13744 / JCM 10971 / SI).